Here is a 389-residue protein sequence, read N- to C-terminus: Succinate--CoA ligase [ADP-forming] subunit beta (389 aa).

One can recognise an ATP-grasp domain in the interval 9-244; the sequence is KAVLAKYGVP…LTEEDPAEVE (236 aa). Residues Lys46, 53–55, Glu99, Ser102, and Glu107 each bind ATP; that span reads GRG. The Mg(2+) site is built by Asn199 and Asp213. Substrate contacts are provided by residues Asn264 and 321–323; that span reads GIM.

The protein belongs to the succinate/malate CoA ligase beta subunit family. Heterotetramer of two alpha and two beta subunits. Requires Mg(2+) as cofactor.

The enzyme catalyses succinate + ATP + CoA = succinyl-CoA + ADP + phosphate. It carries out the reaction GTP + succinate + CoA = succinyl-CoA + GDP + phosphate. It participates in carbohydrate metabolism; tricarboxylic acid cycle; succinate from succinyl-CoA (ligase route): step 1/1. Succinyl-CoA synthetase functions in the citric acid cycle (TCA), coupling the hydrolysis of succinyl-CoA to the synthesis of either ATP or GTP and thus represents the only step of substrate-level phosphorylation in the TCA. The beta subunit provides nucleotide specificity of the enzyme and binds the substrate succinate, while the binding sites for coenzyme A and phosphate are found in the alpha subunit. This chain is Succinate--CoA ligase [ADP-forming] subunit beta, found in Parvibaculum lavamentivorans (strain DS-1 / DSM 13023 / NCIMB 13966).